A 262-amino-acid chain; its full sequence is Probable dihydroorotate dehydrogenase B (NAD(+)), electron transfer subunit (262 aa).

The 94-residue stretch at 4 to 97 (VKPIPAEVVE…RGPYGKPFEV (94 aa)) folds into the FAD-binding FR-type domain. Residues cysteine 217, cysteine 222, cysteine 225, and cysteine 234 each coordinate [2Fe-2S] cluster.

Belongs to the PyrK family. Heterotetramer of 2 PyrK and 2 PyrD type B subunits. [2Fe-2S] cluster is required as a cofactor. FAD serves as cofactor.

It participates in pyrimidine metabolism; UMP biosynthesis via de novo pathway; orotate from (S)-dihydroorotate (NAD(+) route): step 1/1. In terms of biological role, responsible for channeling the electrons from the oxidation of dihydroorotate from the FMN redox center in the PyrD type B subunit to the ultimate electron acceptor NAD(+). This Methanopyrus kandleri (strain AV19 / DSM 6324 / JCM 9639 / NBRC 100938) protein is Probable dihydroorotate dehydrogenase B (NAD(+)), electron transfer subunit.